Here is a 275-residue protein sequence, read N- to C-terminus: MTDEADADPQPFAAPPATGAPAADKPARKPRRAAPRTSEFRIAEQPAFVLHSYPYRETSLVIDVLTRDHGRIALVAKGAKRPHSALRGVLQTFQPLSLSWSGKSELRTLTGAEWVGGMLPLAGDALLCGFYANELLVKFCAREDPHPPLFQHYLVTLTRLAHGEPPVQVLRSFERVLLRETGYAMTLKRTVARRAVEPDKLYVFDPQRGVRDAGSDAPSHWPVIAGQTLLDMEEDDYHRAQTVAQSKTLMRFLLNTYLGGTPLATRQILIDLQNL.

The segment at 1–38 (MTDEADADPQPFAAPPATGAPAADKPARKPRRAAPRTS) is disordered. A compositionally biased stretch (low complexity) spans 8-24 (DPQPFAAPPATGAPAAD).

It belongs to the RecO family.

Its function is as follows. Involved in DNA repair and RecF pathway recombination. The protein is DNA repair protein RecO of Burkholderia pseudomallei (strain 1710b).